Here is a 252-residue protein sequence, read N- to C-terminus: Small ribosomal subunit protein uS2B (252 aa).

Position 2 is an N-acetylserine (serine 2). Composition is skewed to acidic residues over residues 213-229 (VAEE…EEVK) and 241-252 (EWAEENADNVEW). The tract at residues 213–252 (VAEEAAAAEEGEEEEVKEEVTEGQAEATEWAEENADNVEW) is disordered.

This sequence belongs to the universal ribosomal protein uS2 family. Component of the small ribosomal subunit. Mature ribosomes consist of a small (40S) and a large (60S) subunit. The 40S subunit contains about 33 different proteins and 1 molecule of RNA (18S). The 60S subunit contains about 49 different proteins and 3 molecules of RNA (25S, 5.8S and 5S). Interacts with RPS21.

It localises to the cytoplasm. Required for the assembly and/or stability of the 40S ribosomal subunit. Required for the processing of the 20S rRNA-precursor to mature 18S rRNA in a late step of the maturation of 40S ribosomal subunits. The chain is Small ribosomal subunit protein uS2B from Saccharomyces cerevisiae (strain RM11-1a) (Baker's yeast).